The primary structure comprises 374 residues: Queuine tRNA-ribosyltransferase (374 aa).

Catalysis depends on Asp89, which acts as the Proton acceptor. Substrate contacts are provided by residues Asp89–Phe93, Asp143, Gln187, and Gly214. Positions Gly245–Asp251 are RNA binding. The active-site Nucleophile is Asp264. Residues Thr269–Arg273 form an RNA binding; important for wobble base 34 recognition region. Positions 302, 304, 307, and 333 each coordinate Zn(2+).

The protein belongs to the queuine tRNA-ribosyltransferase family. In terms of assembly, homodimer. Within each dimer, one monomer is responsible for RNA recognition and catalysis, while the other monomer binds to the replacement base PreQ1. The cofactor is Zn(2+).

It carries out the reaction 7-aminomethyl-7-carbaguanine + guanosine(34) in tRNA = 7-aminomethyl-7-carbaguanosine(34) in tRNA + guanine. Its pathway is tRNA modification; tRNA-queuosine biosynthesis. Its function is as follows. Catalyzes the base-exchange of a guanine (G) residue with the queuine precursor 7-aminomethyl-7-deazaguanine (PreQ1) at position 34 (anticodon wobble position) in tRNAs with GU(N) anticodons (tRNA-Asp, -Asn, -His and -Tyr). Catalysis occurs through a double-displacement mechanism. The nucleophile active site attacks the C1' of nucleotide 34 to detach the guanine base from the RNA, forming a covalent enzyme-RNA intermediate. The proton acceptor active site deprotonates the incoming PreQ1, allowing a nucleophilic attack on the C1' of the ribose to form the product. After dissociation, two additional enzymatic reactions on the tRNA convert PreQ1 to queuine (Q), resulting in the hypermodified nucleoside queuosine (7-(((4,5-cis-dihydroxy-2-cyclopenten-1-yl)amino)methyl)-7-deazaguanosine). In Shewanella baltica (strain OS185), this protein is Queuine tRNA-ribosyltransferase.